A 388-amino-acid chain; its full sequence is Succinate--CoA ligase [ADP-forming] subunit beta (388 aa).

The 236-residue stretch at 9–244 (KQLFREYGLP…TTQDDEREMH (236 aa)) folds into the ATP-grasp domain. Residues Lys-46, 53-55 (GRG), Glu-99, Ser-102, and Glu-107 each bind ATP. 2 residues coordinate Mg(2+): Asn-199 and Asp-213. Substrate-binding positions include Asn-264 and 321–323 (GIV).

This sequence belongs to the succinate/malate CoA ligase beta subunit family. In terms of assembly, heterotetramer of two alpha and two beta subunits. Requires Mg(2+) as cofactor.

It carries out the reaction succinate + ATP + CoA = succinyl-CoA + ADP + phosphate. It catalyses the reaction GTP + succinate + CoA = succinyl-CoA + GDP + phosphate. It functions in the pathway carbohydrate metabolism; tricarboxylic acid cycle; succinate from succinyl-CoA (ligase route): step 1/1. In terms of biological role, succinyl-CoA synthetase functions in the citric acid cycle (TCA), coupling the hydrolysis of succinyl-CoA to the synthesis of either ATP or GTP and thus represents the only step of substrate-level phosphorylation in the TCA. The beta subunit provides nucleotide specificity of the enzyme and binds the substrate succinate, while the binding sites for coenzyme A and phosphate are found in the alpha subunit. This chain is Succinate--CoA ligase [ADP-forming] subunit beta, found in Psychromonas ingrahamii (strain DSM 17664 / CCUG 51855 / 37).